Here is a 77-residue protein sequence, read N- to C-terminus: Acyl carrier protein (77 aa).

Residues S2–V77 form the Carrier domain. An O-(pantetheine 4'-phosphoryl)serine modification is found at S37.

Belongs to the acyl carrier protein (ACP) family. Post-translationally, 4'-phosphopantetheine is transferred from CoA to a specific serine of apo-ACP by AcpS. This modification is essential for activity because fatty acids are bound in thioester linkage to the sulfhydryl of the prosthetic group.

It is found in the cytoplasm. The protein operates within lipid metabolism; fatty acid biosynthesis. Its function is as follows. Carrier of the growing fatty acid chain in fatty acid biosynthesis. The protein is Acyl carrier protein of Paracoccus denitrificans (strain Pd 1222).